A 232-amino-acid polypeptide reads, in one-letter code: Two-component response regulator ORR4 (232 aa).

Residues 11 to 147 form the Response regulatory domain; that stretch reads HVLAVDDSLI…DMKKLKSHLL (137 aa). Aspartate 80 bears the 4-aspartylphosphate mark. Disordered regions lie at residues 153–174 and 202–232; these read LPMA…AASA and AAAM…AVET. Residues 209–232 are compositionally biased toward polar residues; it reads VISSPDQRTKPRLSSTSSGLAVET.

Belongs to the ARR family. Type-A subfamily. Post-translationally, two-component system major event consists of a His-to-Asp phosphorelay between a sensor histidine kinase (HK) and a response regulator (RR). In plants, the His-to-Asp phosphorelay involves an additional intermediate named Histidine-containing phosphotransfer protein (HPt). This multistep phosphorelay consists of a His-Asp-His-Asp sequential transfer of a phosphate group between first a His and an Asp of the HK protein, followed by the transfer to a conserved His of the HPt protein and finally the transfer to an Asp in the receiver domain of the RR protein. In terms of tissue distribution, expressed in mature leaves and flowers, and at low levels in roots and shoots.

Functions as a response regulator involved in His-to-Asp phosphorelay signal transduction system. Phosphorylation of the Asp residue in the receiver domain activates the ability of the protein to promote the transcription of target genes. Type-A response regulators seem to act as negative regulators of the cytokinin signaling. In Oryza sativa subsp. indica (Rice), this protein is Two-component response regulator ORR4.